The chain runs to 464 residues: Zinc transporter 6-A (464 aa).

The Cytoplasmic segment spans residues 1 to 33 (MGTIYLFRKTQRSLLGKLAQEFRLVTADRRSWK). Residues 34–54 (ILLFGAINVVCTAFLLTWCSS) form a helical membrane-spanning segment. Over 55–64 (TNSMALTAYT) the chain is Extracellular. Residues 65-85 (YLTIFDLFSLITSLISYWVTM) traverse the membrane as a helical segment. Over 86–98 (KKPSPTYSFGFER) the chain is Cytoplasmic. A helical transmembrane segment spans residues 99 to 119 (FEVLAVFASTVLAQLGALFIL). The Extracellular segment spans residues 120-134 (KESAERFIEQPEIHT). The chain crosses the membrane as a helical span at residues 135–155 (GRLLVGTFVALFFNLFTMLSI). At 156–200 (RNKPFAYVSDAASTSWLQEHVADLSRSLCGIIPGLSSIFLPRMNP) the chain is on the cytoplasmic side. The chain crosses the membrane as a helical span at residues 201 to 221 (FVLIDIAGALALCITYMLIEI). Residues 222–223 (NN) are Extracellular-facing. A helical transmembrane segment spans residues 224–244 (YFAVDTASAVAIAVMTFGTMY). The Cytoplasmic portion of the chain corresponds to 245–464 (PMSVYSGKVL…TPGQFTQFRQ (220 aa)).

Belongs to the cation diffusion facilitator (CDF) transporter (TC 2.A.4) family. SLC30A subfamily. As to quaternary structure, heterodimer with SLC30A5; form a functional zinc ion transmembrane transporter.

It localises to the golgi apparatus. Its subcellular location is the trans-Golgi network membrane. Has probably no intrinsic transporter activity but together with SLC30A5 forms a functional zinc ion:proton antiporter heterodimer, mediating zinc entry into the lumen of organelles along the secretory pathway. As part of that zinc ion:proton antiporter, contributes to zinc ion homeostasis within the early secretory pathway and regulates the activation and folding of enzymes like alkaline phosphatases and enzymes involved in phosphatidylinositol glycan anchor biosynthesis. This is Zinc transporter 6-A (slc30a6-a) from Xenopus laevis (African clawed frog).